A 483-amino-acid chain; its full sequence is Probable glycine dehydrogenase (decarboxylating) subunit 2 (483 aa).

Lys-264 bears the N6-(pyridoxal phosphate)lysine mark.

This sequence belongs to the GcvP family. C-terminal subunit subfamily. In terms of assembly, the glycine cleavage system is composed of four proteins: P, T, L and H. In this organism, the P 'protein' is a heterodimer of two subunits. Pyridoxal 5'-phosphate serves as cofactor.

It carries out the reaction N(6)-[(R)-lipoyl]-L-lysyl-[glycine-cleavage complex H protein] + glycine + H(+) = N(6)-[(R)-S(8)-aminomethyldihydrolipoyl]-L-lysyl-[glycine-cleavage complex H protein] + CO2. The glycine cleavage system catalyzes the degradation of glycine. The P protein binds the alpha-amino group of glycine through its pyridoxal phosphate cofactor; CO(2) is released and the remaining methylamine moiety is then transferred to the lipoamide cofactor of the H protein. This Nitrosomonas eutropha (strain DSM 101675 / C91 / Nm57) protein is Probable glycine dehydrogenase (decarboxylating) subunit 2.